The chain runs to 640 residues: Protelomerase (640 aa).

DNA contacts are provided by arginine 275, lysine 300, arginine 383, and histidine 416. Residue tyrosine 425 is the Nucleophile of the active site. Residues 545–585 are compositionally biased toward acidic residues; it reads VDLDDENHDDETLDDDEIEVDESEGEELEEAGDAEEAEVAE. Residues 545–605 are disordered; that stretch reads VDLDDENHDD…FKAPRDNGDG (61 aa).

Belongs to the Caudoviricetes Protelomerase family. Monomer. Homodimer; in presence of DNA.

Functionally, converts the circular intermediates produced by the viral replication and carrying a joined telomere site to a linear DNA molecule with covalently closed hairpin ends. The viral circular DNA is cleaved at a palindromic site called telRL thereby generating a linear prophage plasmid with telomeres. Binds covalently to the 3'-phosphoryl of the cleaved strands. In Klebsiella oxytoca (Bacteriophage phiKO2), this protein is Protelomerase.